The following is a 355-amino-acid chain: MSFSDNLAKILDKYDNLGKKLSSGIMGDEFVKASKEYAELEDVVVKIKEYNKAKSELEEANNFKLELGFDNATLAMIEDEIHILENSLPKLERAVKIALLPKDDADSKSAIIEVRAGSGGEEAALFAAVLFNMYQRYAELKGWRFEILAISDTGIGGYKEASASIKGKDVFSKLKFESGVHRVQRVPETESQGRIHTSAATVAVLPEAEEVDIKIEDKDLRIDTYRASGAGGQHVNTTDSAVRITHIPTGITVALQDEKSQHKNKAKALKILRARIYEEERRNKEQERADSRRGQIGSGDRSERIRTYNFPQGRVSDHRINLTLYKIDEVVKNGQLDEFIEALIAEDEAKKLSEI.

At Q233 the chain carries N5-methylglutamine. Basic and acidic residues predominate over residues 281–293 (RRNKEQERADSRR). A disordered region spans residues 281-308 (RRNKEQERADSRRGQIGSGDRSERIRTY).

The protein belongs to the prokaryotic/mitochondrial release factor family. Methylated by PrmC. Methylation increases the termination efficiency of RF1.

Its subcellular location is the cytoplasm. Functionally, peptide chain release factor 1 directs the termination of translation in response to the peptide chain termination codons UAG and UAA. The protein is Peptide chain release factor 1 of Rickettsia akari (strain Hartford).